Consider the following 884-residue polypeptide: Protein translocase subunit SecA (884 aa).

Residues Gln83, 101–105 (GEGKT), and Asp491 each bind ATP.

The protein belongs to the SecA family.

Its subcellular location is the plastid. It is found in the chloroplast stroma. It localises to the chloroplast thylakoid membrane. The catalysed reaction is ATP + H2O + cellular proteinSide 1 = ADP + phosphate + cellular proteinSide 2.. Its function is as follows. Has a central role in coupling the hydrolysis of ATP to the transfer of proteins across the thylakoid membrane. The sequence is that of Protein translocase subunit SecA from Pyropia yezoensis (Susabi-nori).